We begin with the raw amino-acid sequence, 374 residues long: 4-hydroxy-3-methylbut-2-en-1-yl diphosphate synthase (flavodoxin) (374 aa).

Positions 270, 273, 305, and 312 each coordinate [4Fe-4S] cluster.

The protein belongs to the IspG family. The cofactor is [4Fe-4S] cluster.

It carries out the reaction (2E)-4-hydroxy-3-methylbut-2-enyl diphosphate + oxidized [flavodoxin] + H2O + 2 H(+) = 2-C-methyl-D-erythritol 2,4-cyclic diphosphate + reduced [flavodoxin]. The protein operates within isoprenoid biosynthesis; isopentenyl diphosphate biosynthesis via DXP pathway; isopentenyl diphosphate from 1-deoxy-D-xylulose 5-phosphate: step 5/6. Its function is as follows. Converts 2C-methyl-D-erythritol 2,4-cyclodiphosphate (ME-2,4cPP) into 1-hydroxy-2-methyl-2-(E)-butenyl 4-diphosphate. This chain is 4-hydroxy-3-methylbut-2-en-1-yl diphosphate synthase (flavodoxin), found in Yersinia enterocolitica serotype O:8 / biotype 1B (strain NCTC 13174 / 8081).